Here is a 178-residue protein sequence, read N- to C-terminus: Aspartic proteinase nepenthesin-2 (178 aa).

The active site involves D98.

It belongs to the peptidase A1 family.

It localises to the secreted. It carries out the reaction Similar to pepsin, but also cleaves on either side of Asp and at Lys-|-Arg.. Its activity is regulated as follows. Inhibited by pepstatin and by diazoacetyl-D,L-norleucine methyl ester (DAN) in the presence of Cu(2+) ions. Its function is as follows. Extracellular proteinase found in the pitcher fluid of carnivorous plants. Digest prey for nitrogen uptake. The chain is Aspartic proteinase nepenthesin-2 from Nepenthes distillatoria (Pitcher plant).